The following is a 165-amino-acid chain: Endoribonuclease YbeY (165 aa).

The Zn(2+) site is built by H130, H134, and H140.

Belongs to the endoribonuclease YbeY family. Zn(2+) is required as a cofactor.

Its subcellular location is the cytoplasm. Single strand-specific metallo-endoribonuclease involved in late-stage 70S ribosome quality control and in maturation of the 3' terminus of the 16S rRNA. The polypeptide is Endoribonuclease YbeY (Streptococcus pneumoniae serotype 2 (strain D39 / NCTC 7466)).